Here is a 161-residue protein sequence, read N- to C-terminus: Regulator of ribonuclease activity A (161 aa).

It belongs to the RraA family. Homotrimer. Binds to both RNA-binding sites in the C-terminal region of Rne and to RhlB.

The protein localises to the cytoplasm. Its function is as follows. Globally modulates RNA abundance by binding to RNase E (Rne) and regulating its endonucleolytic activity. Can modulate Rne action in a substrate-dependent manner by altering the composition of the degradosome. Modulates RNA-binding and helicase activities of the degradosome. This Enterobacter sp. (strain 638) protein is Regulator of ribonuclease activity A.